A 349-amino-acid chain; its full sequence is Glycosyltransferase 8 domain-containing protein 2 (349 aa).

Residues 1–6 (MALLRK) lie on the Cytoplasmic side of the membrane. Residues 7–24 (INQVLLFLLIVTLCVILY) form a helical; Signal-anchor for type II membrane protein membrane-spanning segment. The Lumenal segment spans residues 25-349 (KKVHKGTVSK…AGIFKLNHHS (325 aa)). Asparagine 234 carries N-linked (GlcNAc...) asparagine glycosylation.

It belongs to the glycosyltransferase 8 family.

The protein resides in the membrane. This Macaca fascicularis (Crab-eating macaque) protein is Glycosyltransferase 8 domain-containing protein 2 (GLT8D2).